Reading from the N-terminus, the 150-residue chain is Ribonuclease H (150 aa).

The 141-residue stretch at 1–141 (MKSIEVHTDG…VDVLARNQAT (141 aa)) folds into the RNase H type-1 domain. Mg(2+) contacts are provided by aspartate 9, glutamate 47, aspartate 69, and aspartate 133.

Belongs to the RNase H family. As to quaternary structure, monomer. Mg(2+) serves as cofactor.

The protein resides in the cytoplasm. The catalysed reaction is Endonucleolytic cleavage to 5'-phosphomonoester.. Functionally, endonuclease that specifically degrades the RNA of RNA-DNA hybrids. The chain is Ribonuclease H from Xanthomonas oryzae pv. oryzae (strain MAFF 311018).